Here is a 519-residue protein sequence, read N- to C-terminus: Ent-kaurene oxidase (519 aa).

Topologically, residues 1–10 are chloroplast intermembrane; it reads MDTLLSLQAV. A helical transmembrane segment spans residues 11–31; it reads PAAAAIGGPVVAIGGITLFFI. Over 32–519 the chain is Cytoplasmic; it reads REYVKDQRKK…PRLRDRVCVS (488 aa). Residue Cys-458 participates in heme binding.

The protein belongs to the cytochrome P450 family. Requires heme as cofactor.

The protein resides in the plastid. The protein localises to the chloroplast outer membrane. It catalyses the reaction ent-kaur-16-ene + 3 reduced [NADPH--hemoprotein reductase] + 3 O2 = ent-kaur-16-en-19-oate + 3 oxidized [NADPH--hemoprotein reductase] + 4 H2O + 4 H(+). It functions in the pathway plant hormone biosynthesis; gibberellin biosynthesis. Functionally, catalyzes three successive oxidations of the 4-methyl group of ent-kaurene giving kaurenoic acid, a key step in gibberellins (GAs) biosynthesis. GAs, which are involved many processes, including stem elongation, play a central role in plant development. The protein is Ent-kaurene oxidase of Salvia miltiorrhiza (Chinese sage).